A 344-amino-acid polypeptide reads, in one-letter code: Adenine deaminase (344 aa).

His24, His26, and His204 together coordinate Zn(2+). Residue Glu207 is the Proton donor of the active site. Residue Asp285 participates in Zn(2+) binding. A substrate-binding site is contributed by Asp286.

The protein belongs to the metallo-dependent hydrolases superfamily. Adenosine and AMP deaminases family. Adenine deaminase type 2 subfamily. The cofactor is Zn(2+).

It catalyses the reaction adenine + H2O + H(+) = hypoxanthine + NH4(+). In terms of biological role, catalyzes the hydrolytic deamination of adenine to hypoxanthine. Plays an important role in the purine salvage pathway and in nitrogen catabolism. The sequence is that of Adenine deaminase from Caulobacter vibrioides (strain ATCC 19089 / CIP 103742 / CB 15) (Caulobacter crescentus).